Reading from the N-terminus, the 346-residue chain is Cell division protein ZipA (346 aa).

The Periplasmic segment spans residues 1–6; it reads MEDLQL. A helical membrane pass occupies residues 7-27; sequence VLFVLGAIAIVAVLVHGFWSI. Residues 28–346 are Cytoplasmic-facing; sequence RRQQPKSLKD…DYLHRIRANA (319 aa). 2 disordered regions span residues 76–103 and 121–145; these read ANEA…QPVE and QPDF…RQEP.

It belongs to the ZipA family. In terms of assembly, interacts with FtsZ via their C-terminal domains.

It localises to the cell inner membrane. Functionally, essential cell division protein that stabilizes the FtsZ protofilaments by cross-linking them and that serves as a cytoplasmic membrane anchor for the Z ring. Also required for the recruitment to the septal ring of downstream cell division proteins. This is Cell division protein ZipA from Shewanella sp. (strain MR-7).